Reading from the N-terminus, the 514-residue chain is ATP synthase subunit alpha (514 aa).

170–177 is an ATP binding site; the sequence is GDRQIGKT.

It belongs to the ATPase alpha/beta chains family. F-type ATPases have 2 components, CF(1) - the catalytic core - and CF(0) - the membrane proton channel. CF(1) has five subunits: alpha(3), beta(3), gamma(1), delta(1), epsilon(1). CF(0) has three main subunits: a(1), b(2) and c(9-12). The alpha and beta chains form an alternating ring which encloses part of the gamma chain. CF(1) is attached to CF(0) by a central stalk formed by the gamma and epsilon chains, while a peripheral stalk is formed by the delta and b chains.

It localises to the cell inner membrane. It catalyses the reaction ATP + H2O + 4 H(+)(in) = ADP + phosphate + 5 H(+)(out). In terms of biological role, produces ATP from ADP in the presence of a proton gradient across the membrane. The alpha chain is a regulatory subunit. The protein is ATP synthase subunit alpha of Alcanivorax borkumensis (strain ATCC 700651 / DSM 11573 / NCIMB 13689 / SK2).